Here is an 853-residue protein sequence, read N- to C-terminus: Cytochrome P450 monooxygenase mpaDE (853 aa).

At 1 to 6 (MKSLSL) the chain is on the lumenal side. The chain crosses the membrane as a helical span at residues 7–29 (TWITAVAVVLYLVQRYVRSYWRL). The Cytoplasmic portion of the chain corresponds to 30–853 (KDIPGPVLAK…DIENSIEGQK (824 aa)). Position 449 (C449) interacts with heme.

This sequence belongs to the cytochrome P450 family. Heme serves as cofactor.

It is found in the endoplasmic reticulum membrane. The catalysed reaction is 5-methylorsellinate + reduced [NADPH--hemoprotein reductase] + O2 = 4,6-dihydroxy-2-(hydroxymethyl)-3-methylbenzoate + oxidized [NADPH--hemoprotein reductase] + H2O + H(+). The enzyme catalyses 4,6-dihydroxy-2-(hydroxymethyl)-3-methylbenzoate + H(+) = 5,7-dihydroxy-4-methylphthalide + H2O. It participates in secondary metabolite biosynthesis; terpenoid biosynthesis. Functionally, cytochrome P450 monooxygenase; part of the gene cluster that mediates the biosynthesis of mycophenolic acid (MPA), the first isolated antibiotic natural product in the world obtained from a culture of Penicillium brevicompactum in 1893. MpaDE is an endoplasmic reticulum-bound enzyme that catalyzes the conversion of 5-methylorsellinic acid (5MOA) into the phthalide compound 5,7-dihydroxy-4,6-dimethylphthalide (DHMP). MpaDE first catalyzes hydroxylation of 5-MOA to 4,6-dihydroxy-2-(hydroxymethyl)-3-methylbenzoic acid (DHMB), and then acts as a lactone synthase that catalyzes the ring closure to convert DHMB into DHMP. The first step of the pathway is the synthesis of 5-methylorsellinic acid (5MOA) by the cytosolic polyketide synthase mpaC. 5MOA is then converted to the phthalide compound 5,7-dihydroxy-4,6-dimethylphthalide (DHMP) by the endoplasmic reticulum-bound cytochrome P450 monooxygenase mpaDE. MpaDE first catalyzes hydroxylation of 5-MOA to 4,6-dihydroxy-2-(hydroxymethyl)-3-methylbenzoic acid (DHMB). MpaDE then acts as a lactone synthase that catalyzes the ring closure to convert DHMB into DHMP. The next step is the prenylation of DHMP by the Golgi apparatus-associated prenyltransferase mpaA to yield farnesyl-DHMP (FDHMP). The ER-bound oxygenase mpaB then mediates the oxidative cleavage the C19-C20 double bond in FDHMP to yield FDHMP-3C via a mycophenolic aldehyde intermediate. The O-methyltransferase mpaG catalyzes the methylation of FDHMP-3C to yield MFDHMP-3C. After the cytosolic methylation of FDHMP-3C, MFDHMP-3C enters into peroxisomes probably via free diffusion due to its low molecular weight. Upon a peroxisomal CoA ligation reaction, catalyzed by a beta-oxidation component enzyme acyl-CoA ligase ACL891, MFDHMP-3C-CoA would then be restricted to peroxisomes for the following beta-oxidation pathway steps. The peroxisomal beta-oxidation machinery than converts MFDHMP-3C-CoA into MPA_CoA, via a beta-oxidation chain-shortening process. Finally mpaH acts as a peroxisomal acyl-CoA hydrolase with high substrate specificity toward MPA-CoA to release the final product MPA. In Penicillium brevicompactum, this protein is Cytochrome P450 monooxygenase mpaDE.